Reading from the N-terminus, the 614-residue chain is Probable ATP-dependent RNA helicase DDX5 (614 aa).

Residues 1 to 15 are compositionally biased toward basic and acidic residues; sequence MSSYSSDRDRGRDRG. The segment at 1-39 is disordered; that stretch reads MSSYSSDRDRGRDRGFGAPRFGGSRTGPLSGKKFGNPGE. Ser-24 bears the Phosphoserine mark. N6-acetyllysine; alternate is present on Lys-32. Residue Lys-32 forms a Glycyl lysine isopeptide (Lys-Gly) (interchain with G-Cter in SUMO2); alternate linkage. 2 positions are modified to N6-acetyllysine: Lys-33 and Lys-40. Residue Lys-45 forms a Glycyl lysine isopeptide (Lys-Gly) (interchain with G-Cter in SUMO2) linkage. Lys-53 is covalently cross-linked (Glycyl lysine isopeptide (Lys-Gly) (interchain with G-Cter in SUMO2); alternate). A Glycyl lysine isopeptide (Lys-Gly) (interchain with G-Cter in SUMO); alternate cross-link involves residue Lys-53. A Glycyl lysine isopeptide (Lys-Gly) (interchain with G-Cter in SUMO1); alternate cross-link involves residue Lys-53. Positions 94–122 match the Q motif motif; the sequence is LNFYEANFPANVMDVIARQNFTEPTAIQA. ATP-binding positions include 114 to 116, Gln-121, and 138 to 145; these read FTE and AQTGSGKT. The Helicase ATP-binding domain maps to 125 to 300; sequence WPVALSGLDM…EDFLKDYIHI (176 aa). Lys-236 carries the N6-acetyllysine modification. The DEAD box signature appears at 248–251; the sequence is DEAD. The residue at position 297 (Tyr-297) is a Phosphotyrosine. Positions 328–475 constitute a Helicase C-terminal domain; that stretch reads KLIRLMEEIM…AINPKLLQLV (148 aa). Residues Lys-340, Lys-343, Lys-388, Lys-391, Lys-411, Lys-437, Lys-451, and Lys-470 each participate in a glycyl lysine isopeptide (Lys-Gly) (interchain with G-Cter in SUMO2) cross-link. The disordered stretch occupies residues 477–504; that stretch reads DRGSGRSRGRGGMKDDRRDRYSAGKRGG. The segment at 477–614 is transactivation domain; it reads DRGSGRSRGR…GYPMPTGYSQ (138 aa). At Ser-480 the chain carries Phosphoserine. Residues 488 to 498 show a composition bias toward basic and acidic residues; that stretch reads GMKDDRRDRYS. Lys-523 participates in a covalent cross-link: Glycyl lysine isopeptide (Lys-Gly) (interchain with G-Cter in SUMO2).

It belongs to the DEAD box helicase family. DDX5/DBP2 subfamily. In terms of assembly, identified in the spliceosome C complex. Component of a ribonucleoprotein complex containing mRNAs and RNA-binding proteins including DDX5, HNRNPH2 and SRSF1 as well as splicing regulator ARVCF. Interacts with RBM4; the interaction occurs in an RNA-independent manner. Interacts with AGO1 and AGO2. Interacts with ESR1, AR, EP300, CREBBP, POLR2A, TP53, RUNX2 and HDAC1. Self-associates. Interacts with DDX17. Interacts with BRDT. The large PER complex involved in the repression of transcriptional termination is composed of at least PER2, CDK9, DDX5, DHX9, NCBP1 and POLR2A (active). Interacts with DHX36; this interaction occurs in a RNA-dependent manner. Interacts with NUPR1. Interacts with ERCC6. Interacts with DDX3X in the cytoplasm; this interaction may be more efficient when both proteins are unphosphorylated. In terms of processing, sumoylated; sumoylation, promoted by PIAS1, promotes interaction with HDAC1 and transcriptional repression activity. Sumoylation also significantly increases stability, and reduces polyubiquitination. Polyubiquitinated, leading to proteasomal degradation. Post-translationally, weakly phosphorylated in the G1/S phase of the cell cycle and much more at G2/M, especially at Thr and Tyr residues.

Its subcellular location is the nucleus. The protein resides in the nucleolus. It localises to the cytoplasm. The catalysed reaction is ATP + H2O = ADP + phosphate + H(+). Involved in the alternative regulation of pre-mRNA splicing; its RNA helicase activity is necessary for increasing tau exon 10 inclusion and occurs in a RBM4-dependent manner. Binds to the tau pre-mRNA in the stem-loop region downstream of exon 10. The rate of ATP hydrolysis is highly stimulated by single-stranded RNA. Involved in transcriptional regulation; the function is independent of the RNA helicase activity. Transcriptional coactivator for androgen receptor AR but probably not ESR1. Synergizes with DDX17 and SRA1 RNA to activate MYOD1 transcriptional activity and involved in skeletal muscle differentiation. Transcriptional coactivator for p53/TP53 and involved in p53/TP53 transcriptional response to DNA damage and p53/TP53-dependent apoptosis. Transcriptional coactivator for RUNX2 and involved in regulation of osteoblast differentiation. Acts as a transcriptional repressor in a promoter-specific manner; the function probably involves association with histone deacetylases, such as HDAC1. As component of a large PER complex is involved in the inhibition of 3' transcriptional termination of circadian target genes such as PER1 and NR1D1 and the control of the circadian rhythms. The polypeptide is Probable ATP-dependent RNA helicase DDX5 (Ddx5) (Mus musculus (Mouse)).